A 134-amino-acid polypeptide reads, in one-letter code: Replication enhancer protein (134 aa).

It belongs to the geminiviridae replication enhancer protein family. As to quaternary structure, homooligomer. Interacts with the replication-associated protein (REP). Interacts with host proliferating cell nuclear antigen (PCNA). Interacts with host retinoblastoma-related protein 1 (RBR1), and may thereby deregulate the host cell cycle. Oligomerization and interaction with PCNA are necessary for optimal replication enhancement.

In terms of biological role, increases viral DNA accumulation. Enhances infectivity and symptom expression. This African cassava mosaic virus (isolate West Kenyan 844) (ACMV) protein is Replication enhancer protein.